Reading from the N-terminus, the 606-residue chain is Proton myo-inositol cotransporter hmit-1.1 (606 aa).

At 1 to 20 the chain is on the cytoplasmic side; that stretch reads MVAVAAFSSSGQDKPAHTPK. Residues 21–41 form a helical membrane-spanning segment; it reads LGLFVYILAAASVIGGFLFGY. Residues 42-63 lie on the Extracellular side of the membrane; the sequence is DTSVVSAAMLYMPDAPGLKPMD. The helical transmembrane segment at 64–84 threads the bilayer; sequence TVWQEVLVSISPGMAAVGSLM. Residues 85–96 lie on the Cytoplasmic side of the membrane; sequence SGTSSDYIGRRK. The chain crosses the membrane as a helical span at residues 97 to 117; the sequence is VILGASAIFTIGALVCAASVN. Position 118 (lysine 118) is a topological domain, extracellular. A helical membrane pass occupies residues 119 to 139; that stretch reads IMLLVGRVLLGIAIGFASMIV. Residues 140–152 lie on the Cytoplasmic side of the membrane; sequence PVYLGETAPTHVR. The chain crosses the membrane as a helical span at residues 153–173; that stretch reads GMLVAAFALMISFGQVVANIT. At 174-188 the chain is on the extracellular side; sequence GGAFSYIDPYNVGWR. The helical transmembrane segment at 189 to 209 threads the bilayer; it reads LMFAFAAVPSIIQFVCFMFLP. Topologically, residues 210 to 278 are cytoplasmic; sequence ETPRWLYENG…RILKTPHVLK (69 aa). A helical membrane pass occupies residues 279–299; it reads ACFIGSMLQAFQQLAGINTIL. Topologically, residues 300-317 are extracellular; it reads YYTADIIRSSGISNNHTT. An N-linked (GlcNAc...) asparagine glycan is attached at asparagine 314. The helical transmembrane segment at 318–338 threads the bilayer; the sequence is IWISVLLSLCNFIGPFVPMSL. Residues 339-345 lie on the Cytoplasmic side of the membrane; sequence IEKVGRR. The chain crosses the membrane as a helical span at residues 346–366; the sequence is IIFLFSCGLVVLSLVFIGVAF. Residues 367–464 lie on the Extracellular side of the membrane; the sequence is LLVNHDSAAT…EKYYCDTKYT (98 aa). Asparagine 387 and asparagine 445 each carry an N-linked (GlcNAc...) asparagine glycan. The helical transmembrane segment at 465-485 threads the bilayer; it reads LLPIIACGVYLLTFSSGFTSL. The Cytoplasmic portion of the chain corresponds to 486 to 501; it reads PWVLNSEFYPMWARST. The helical transmembrane segment at 502–522 threads the bilayer; that stretch reads CVAISTTSNWVFNLIIALTYL. Topologically, residues 523–531 are extracellular; the sequence is SLTQVIGKY. A helical transmembrane segment spans residues 532–552; the sequence is GAFWLYAGLTVIAFIFILFLV. Over 553–606 the chain is Cytoplasmic; that stretch reads PETKGYSIEEVEMLFMNKKQRREAESRRRETVTEVRSRMNSTVSFGQHNEVHKY.

The protein belongs to the major facilitator superfamily. Sugar transporter (TC 2.A.1.1) family. Expressed in the intestine.

The protein localises to the cell membrane. It catalyses the reaction myo-inositol(out) + H(+)(out) = myo-inositol(in) + H(+)(in). Its function is as follows. H(+)-myo-inositol cotransporter. Probably by promoting the transport of myo-inositol regulates intracellular osmosis in response to hyperosmotic stress. This is Proton myo-inositol cotransporter hmit-1.1 from Caenorhabditis elegans.